We begin with the raw amino-acid sequence, 619 residues long: Interferon-activable protein 204 (619 aa).

In terms of domain architecture, Pyrin spans 1-88; that stretch reads MVNEYKRIVL…AEILKKERSE (88 aa). Positions 24 to 35 match the Nuclear export signal motif; that stretch reads LFKSLLARDLNL. Over residues 86-99 the composition is skewed to basic and acidic residues; the sequence is RSEVTGETSLEKNG. The disordered stretch occupies residues 86-223; sequence RSEVTGETSL…QNQNIPRGAV (138 aa). Positions 122–153 are enriched in low complexity; sequence TSATQEETSTAQAGTSTAQARTSTAQAGTSTA. Tandem repeats lie at residues 134–140, 141–147, and 148–154. The 3 X 7 AA tandem repeats of A-[GR]-T-S-T-A-Q stretch occupies residues 134-154; the sequence is AGTSTAQARTSTAQAGTSTAQ. Positions 150 to 157 match the Nuclear localization signal motif; that stretch reads TSTAQKRK. Positions 159–176 are enriched in basic and acidic residues; that stretch reads MREEETGVKKSKAAKEPD. The span at 190-206 shows a compositional bias: low complexity; that stretch reads SPILHSSSSASSNIPSA. The span at 207–218 shows a compositional bias: polar residues; sequence KNQKSQPQNQNI. HIN-200 domains lie at 213–413 and 417–615; these read PQNQ…IKIS and NVPK…MQVI. Residues 550–614 are interaction with ID2; sequence KKTERNKFIY…RSVRHSYMQV (65 aa).

This sequence belongs to the HIN-200 family. In terms of assembly, interacts with UBTF. Interacts with RUNX2. Interacts with ID1, ID2 and ID3. Interacts with STING. In terms of processing, acetylated upon bacterial infection, leading to translocation from nucleus to cytoplasm and subsequent recruitment of STING to activate IFN-beta production. In terms of tissue distribution, present in osteoblasts (at protein level).

Its subcellular location is the nucleus. It is found in the nucleolus. The protein localises to the cytoplasm. In terms of biological role, interferon-stimulated protein that plays a role in several biological processes including cell differentiation, autophagy and innate immunity. Cooperates with CGAS to sense dsDNA and activates the STING-dependent type I IFN pathway. Mechanistically, gets acetylated upon bacterial infection and then translocates from nucleus into cytoplasm to recruit STING for activation of TBK1-dependent IRF3 nuclear translocation and IFN-beta release. Inhibits the transcription of ribosomal RNA. May inhibit DNA binding by UBTF. Inhibits cell growth via p53/TP53 and RB1-dependent and independent pathways. Acts as a coactivator of RUNX2 during osteogenesis. May be involved in macrophage differentiation. Enables skeletal muscle and cardiac myocyte differentiation by sequestring Id proteins in the cytosol and promoting their ubiquitination and subsequent degradation. The polypeptide is Interferon-activable protein 204 (Ifi204) (Mus musculus (Mouse)).